Consider the following 286-residue polypeptide: Polyamine aminopropyltransferase (286 aa).

The 235-residue stretch at Met1–Thr235 folds into the PABS domain. An S-methyl-5'-thioadenosine-binding site is contributed by Gln30. Positions 61 and 85 each coordinate spermidine. S-methyl-5'-thioadenosine contacts are provided by residues Glu105 and Asp137–Gly138. The active-site Proton acceptor is the Asp155. Asp155–Asp158 provides a ligand contact to spermidine. Pro162 provides a ligand contact to S-methyl-5'-thioadenosine.

Belongs to the spermidine/spermine synthase family. In terms of assembly, homodimer or homotetramer.

The protein resides in the cytoplasm. It carries out the reaction S-adenosyl 3-(methylsulfanyl)propylamine + putrescine = S-methyl-5'-thioadenosine + spermidine + H(+). It participates in amine and polyamine biosynthesis; spermidine biosynthesis; spermidine from putrescine: step 1/1. Its function is as follows. Catalyzes the irreversible transfer of a propylamine group from the amino donor S-adenosylmethioninamine (decarboxy-AdoMet) to putrescine (1,4-diaminobutane) to yield spermidine. The polypeptide is Polyamine aminopropyltransferase (Pseudomonas syringae pv. tomato (strain ATCC BAA-871 / DC3000)).